Here is a 465-residue protein sequence, read N- to C-terminus: Purple acid phosphatase 2 (465 aa).

The N-terminal stretch at 1–32 is a signal peptide; it reads MGASRTGCYLLAVVLAAVMNAAIAGITSSFIR. Asn-110 and Asn-138 each carry an N-linked (GlcNAc...) asparagine glycan. Asp-164 contributes to the Fe cation binding site. An N-linked (GlcNAc...) asparagine glycan is attached at Asn-172. Residues Asp-193 and Tyr-196 each coordinate Fe cation. Asp-193 is a Mn(2+) binding site. A Mn(2+)-binding site is contributed by Asn-230. Asn-230 serves as a coordination point for substrate. Asn-303 is a glycosylation site (N-linked (GlcNAc...) asparagine). Mn(2+) is bound at residue His-315. His-325 (proton donor) is an active-site residue. Residue His-352 participates in Mn(2+) binding. 352–354 contributes to the substrate binding site; the sequence is HVH. His-354 contributes to the Fe cation binding site. 2 N-linked (GlcNAc...) asparagine glycosylation sites follow: Asn-400 and Asn-425.

The protein belongs to the metallophosphoesterase superfamily. Purple acid phosphatase family. In terms of assembly, homodimer; disulfide-linked. Requires Fe cation as cofactor. It depends on Mn(2+) as a cofactor. The cofactor is Zn(2+). Cu(2+) serves as cofactor. Mg(2+) is required as a cofactor.

The protein localises to the secreted. The catalysed reaction is a phosphate monoester + H2O = an alcohol + phosphate. The sequence is that of Purple acid phosphatase 2 (PAP2) from Ipomoea batatas (Sweet potato).